A 333-amino-acid chain; its full sequence is L-lactate dehydrogenase (333 aa).

NAD(+) contacts are provided by residues 29–57 (GQVG…VADK) and Arg99. Residues Arg106, Asn138, and Arg169 each contribute to the substrate site. Asn138 provides a ligand contact to NAD(+). His193 serves as the catalytic Proton acceptor. Thr249 serves as a coordination point for substrate.

It belongs to the LDH/MDH superfamily. LDH family. Homotetramer.

The protein resides in the cytoplasm. The enzyme catalyses (S)-lactate + NAD(+) = pyruvate + NADH + H(+). Its pathway is fermentation; pyruvate fermentation to lactate; (S)-lactate from pyruvate: step 1/1. This is L-lactate dehydrogenase (ldh-1) from Caenorhabditis elegans.